Reading from the N-terminus, the 445-residue chain is Methylenetetrahydrofolate--tRNA-(uracil-5-)-methyltransferase TrmFO (445 aa).

9–14 (GGGLAG) lines the FAD pocket.

This sequence belongs to the MnmG family. TrmFO subfamily. It depends on FAD as a cofactor.

The protein resides in the cytoplasm. The catalysed reaction is uridine(54) in tRNA + (6R)-5,10-methylene-5,6,7,8-tetrahydrofolate + NADH + H(+) = 5-methyluridine(54) in tRNA + (6S)-5,6,7,8-tetrahydrofolate + NAD(+). It carries out the reaction uridine(54) in tRNA + (6R)-5,10-methylene-5,6,7,8-tetrahydrofolate + NADPH + H(+) = 5-methyluridine(54) in tRNA + (6S)-5,6,7,8-tetrahydrofolate + NADP(+). In terms of biological role, catalyzes the folate-dependent formation of 5-methyl-uridine at position 54 (M-5-U54) in all tRNAs. This is Methylenetetrahydrofolate--tRNA-(uracil-5-)-methyltransferase TrmFO from Solibacter usitatus (strain Ellin6076).